The sequence spans 127 residues: Large ribosomal subunit protein bL17 (127 aa).

This sequence belongs to the bacterial ribosomal protein bL17 family. As to quaternary structure, part of the 50S ribosomal subunit. Contacts protein L32.

The sequence is that of Large ribosomal subunit protein bL17 from Fervidobacterium nodosum (strain ATCC 35602 / DSM 5306 / Rt17-B1).